We begin with the raw amino-acid sequence, 145 residues long: Large ribosomal subunit protein uL13 (145 aa).

Belongs to the universal ribosomal protein uL13 family. In terms of assembly, part of the 50S ribosomal subunit.

Functionally, this protein is one of the early assembly proteins of the 50S ribosomal subunit, although it is not seen to bind rRNA by itself. It is important during the early stages of 50S assembly. The polypeptide is Large ribosomal subunit protein uL13 (Bacillus licheniformis (strain ATCC 14580 / DSM 13 / JCM 2505 / CCUG 7422 / NBRC 12200 / NCIMB 9375 / NCTC 10341 / NRRL NRS-1264 / Gibson 46)).